Reading from the N-terminus, the 284-residue chain is Avenin-like b9 (284 aa).

Positions methionine 1–alanine 18 are cleaved as a signal peptide.

It belongs to the prolamin family. Post-translationally, contains disulfide bonds.

In terms of biological role, seed storage protein. Might be integrated via inter-chain disulfide bonds within the glutenin polymer. This Triticum aestivum (Wheat) protein is Avenin-like b9.